A 250-amino-acid chain; its full sequence is Aquaporin TIP1-1 (250 aa).

2 consecutive transmembrane segments (helical) span residues 24-44 and 56-76; these read FAEFISTLIFVFAGQGSGMAF and AGLIAAAVAHAFALFVAVSVG. The short motif at 85–87 is the NPA 1 element; the sequence is NPA. A run of 3 helical transmembrane segments spans residues 104–126, 143–163, and 172–192; these read LLYWVAQLLGSTVACFLLRFSTG, ALVLEIVMTFGLVYTVYATAV, and TIAPIAIGFIVGANILVGGAF. Residues 198 to 200 carry the NPA 2 motif; sequence NPA. The helical transmembrane segment at 218 to 238 threads the bilayer; it reads YWVGPLIGGGLAGVIYELLFI.

It belongs to the MIP/aquaporin (TC 1.A.8) family. TIP (TC 1.A.8.10) subfamily. Expressed in roots, shoots, leaves, tassels, ears and embryos. Expressed in meristems and zones of cell enlargement: tips of primary and lateral roots, leaf primordia, and male and female inflorescence meristems. Highly expressed in the root epidermis and endodermis, parenchyma cells surrounding mature xylem vessels in the root and the stem, phloem companion cells and a ring of cells around the phloem strand in the stem and the leaf sheath, and the basal endosperm transfer cells in developing kernels.

It is found in the vacuole membrane. Its function is as follows. Water channel required to facilitate the transport of water across cell membrane. May support the rapid influx of water into vacuoles during cell expansion, permit osmotic equilibration between the cytosol and the vacuolar content and rapid transcellular water flow through living cells. Its function is impaired by Hg(2+). The chain is Aquaporin TIP1-1 (TIP1-1) from Zea mays (Maize).